The primary structure comprises 742 residues: MEQTYQYAWIIPFLPLPVPMLIGLGLLLFPTATKSLRRMWSFQSVLLLSIVMIFSMNLSIQQINSSYVYQYVWSWIINNDFSLEFGYLIDPLTSIMLILITTVGIMVLIYSDNYMSHDHGYLRFFAYMSFFSTSMLGLVTSSNLIQIYIFWELVGICSYLLIGFWFTRPVAAKACQKAFVTNRVGDFGLLLGILGFYWITGSFEFRDLFQIFNNLISNNEVNFLFVTLCAILLFAGAIAKSAQFPLHVWLPDAMEGPTPISALIHAATMVAAGIFLVARLMPLFIVIPHIMNFISLIGIITVFLGATLALAQKDIKRGLAYSTMSQLGYMMLALGMGSYRSALFHLITHAYSKALLFLGSGSVIHSMETLVGYCPKKSQNMVLMGGLTKHLPITKNSFLLGTLSLCGIPPLACFWSKDEILNDSWLYSPIFGIIAWSTAGLTAFYMCRIYLLTFEGHLNVHFQNYSGKRNTPFYSISLWGKEGSKISNKNFSLVTLLKMKKNPRPSFFSNNKVYKIDENVRNMIQPFLSIPHFGNTKTYSYPYESDNTMLFPILILILFTLFVGFLGIPFNQDVDILSKWLNPSINLLHQNSNNSIDWYEFSKDAFFSVSIASFGIFIAFFLYKPVYSSFQNLEFLNTFVKMGPNRIFYDKIKNSIYDWSYNRGYIDAFYGRFLTAGIRKLANFAHFFDRRIIDAIPNGVGLMSFFGAEVIKSVGGGRISSYLFFYFSYVAIFLLIYYFFNV.

16 helical membrane-spanning segments follow: residues 9-29 (WIIP…LLLF), 40-60 (WSFQ…NLSI), 89-109 (IDPL…MVLI), 125-145 (FAYM…SNLI), 147-167 (IYIF…FWFT), 185-205 (GDFG…SFEF), 219-239 (NEVN…GAIA), 258-278 (TPIS…FLVA), 283-303 (LFIV…ITVF), 327-347 (LGYM…FHLI), 354-374 (ALLF…VGYC), 396-416 (NSFL…CFWS), 425-445 (WLYS…TAFY), 550-570 (LFPI…GIPF), 606-626 (FFSV…YKPV), and 722-742 (YLFF…FFNV).

It belongs to the complex I subunit 5 family. In terms of assembly, NDH is composed of at least 16 different subunits, 5 of which are encoded in the nucleus.

The protein resides in the plastid. It localises to the chloroplast thylakoid membrane. It catalyses the reaction a plastoquinone + NADH + (n+1) H(+)(in) = a plastoquinol + NAD(+) + n H(+)(out). The enzyme catalyses a plastoquinone + NADPH + (n+1) H(+)(in) = a plastoquinol + NADP(+) + n H(+)(out). Functionally, NDH shuttles electrons from NAD(P)H:plastoquinone, via FMN and iron-sulfur (Fe-S) centers, to quinones in the photosynthetic chain and possibly in a chloroplast respiratory chain. The immediate electron acceptor for the enzyme in this species is believed to be plastoquinone. Couples the redox reaction to proton translocation, and thus conserves the redox energy in a proton gradient. This Lactuca sativa (Garden lettuce) protein is NAD(P)H-quinone oxidoreductase subunit 5, chloroplastic (ndhF).